The chain runs to 171 residues: Transcription antitermination protein NusB (171 aa).

Belongs to the NusB family.

Its function is as follows. Involved in transcription antitermination. Required for transcription of ribosomal RNA (rRNA) genes. Binds specifically to the boxA antiterminator sequence of the ribosomal RNA (rrn) operons. The protein is Transcription antitermination protein NusB of Brucella melitensis biotype 1 (strain ATCC 23456 / CCUG 17765 / NCTC 10094 / 16M).